A 450-amino-acid chain; its full sequence is Caspase Dronc (450 aa).

Positions 1–134 (MQPPELEIGM…RTSRKSADIV (134 aa)) are excised as a propeptide. Positions 64–109 (EKDVRVEQHRRLLLKITQRGPTAYNLLINALRNINCLDAAVLLESV) constitute a CARD domain. The tract at residues 114–125 (SRPPFISLNERR) is required for binding Diap1. Residues His271 and Cys318 contribute to the active site. A propeptide spanning residues 321–324 (DEYD) is cleaved from the precursor.

This sequence belongs to the peptidase C14A family. In terms of assembly, interacts (via residues 114-125) with Diap1 (via BIR 2 domain); binding blocks Dronc-mediated cell death. Can form a stable complex with Drice. Rpr, hid and grim can out-compete Dronc for binding Diap1, therefore removing Diap1-mediated ubiquitination. Interacts (via CARD domain) with Dark (via Dark CARD and WD domains); the interaction stimulates Dark oligomerization to form the apoptosome and brings pairs of Dronc molecules together on the apoptosome to facilitate their dimerization and activation by autocatalytic cleavage. Binding to Dark stimulates apoptosome assembly. After autocatalytic cleavage the Dronc caspase domain dissociates from the apoptosome but the CARD domain remains associated. Post-translationally, ubiquitinated by Diap1, leading to its subsequent degradation. In terms of tissue distribution, ubiquitously expressed in embryos during early stages of development. In late third instar larvae, dramatic up-regulation in salivary glands and midgut before histolysis of these tissues.

It is found in the cytoplasm. The catalysed reaction is Strict requirement for an Asp residue at position P1 and with a marked preference for His at position P2. It has a preferred cleavage sequence of Leu-Gly-His-Asp-|-Xaa.. With respect to regulation, zymogen activated by autocatalytic cleavage; association with the Dark apoptosome brings multiple molecules together to facilitate their dimerization and activation by autocatalytic cleavage. Involved in the activation cascade of caspases responsible for apoptosis execution. Effector of steroid-mediated apoptosis during insect metamorphosis. Overexpression promotes programmed cell death. Interaction with Diap1 is required to suppress Dronc-mediated cell death; via Diap1-mediated ubiquitination of Dronc. Rate-limiting caspase in rpr, grim and hid death pathway. Recruited to the Dark apoptosome, an adapter protein complex that mediates activation of the caspase cascade in programmed cell death initiated by the intrinsic apoptosis pathway. Association with the Dark apoptosome stimulates autocatalytic cleavage and activation of Dronc, promoting Dronc-mediated cleavage of downstream effector caspases such as Drice. The sequence is that of Caspase Dronc from Drosophila melanogaster (Fruit fly).